Consider the following 372-residue polypeptide: Proline-rich P65 protein homolog (372 aa).

Residues 1-37 (MEKNRSAFQQNQQASNQPFNQDQNQYYQDPNQQQFNQ) show a composition bias toward low complexity. Residues 1–100 (MEKNRSAFQQ…GFDPNQQYYQ (100 aa)) are disordered. Repeat copies occupy residues 29–40 (DPNQQQFNQSGF), 41–52 (DPNQQQFNQPGF), 53–60 (DPNQQYYQ), 61–72 (DPNQQQFNQAGF), 73–80 (DQNQQYYQ), 81–92 (DPNQQQFNQPGF), 93–100 (DPNQQYYQ), 101–112 (DPNQQQFNQAGF), 113–119 (DQNQYYQ), 120–131 (DPNQQQFNQSGF), 132–138 (DQNQYYQ), 139–150 (DPNQQQFNQPSF), and 151–162 (DLNNQQFNQPGF). Positions 38-49 (SGFDPNQQQFNQ) are enriched in polar residues. Low complexity predominate over residues 53–100 (DPNQQYYQDPNQQQFNQAGFDQNQQYYQDPNQQQFNQPGFDPNQQYYQ). The interval 122-150 (NQQQFNQSGFDQNQYYQDPNQQQFNQPSF) is disordered.

The chain is Proline-rich P65 protein homolog from Mycoplasma genitalium (strain ATCC 33530 / DSM 19775 / NCTC 10195 / G37) (Mycoplasmoides genitalium).